Here is a 222-residue protein sequence, read N- to C-terminus: Probable elongation factor 1-beta (222 aa).

Residues 90–111 (KPAADDDDDVDLFGSDDEEDEE) form a disordered region. Acidic residues predominate over residues 94–111 (DDDDDVDLFGSDDEEDEE). Position 104 is a phosphoserine (Ser-104).

This sequence belongs to the EF-1-beta/EF-1-delta family. As to quaternary structure, EF-1 is composed of 4 subunits: alpha, beta, beta' and gamma. Phosphorylation affects the GDP/GTP exchange rate.

Its function is as follows. EF-1-beta and EF-1-delta stimulate the exchange of GDP bound to EF-1-alpha to GTP. The sequence is that of Probable elongation factor 1-beta from Drosophila melanogaster (Fruit fly).